A 269-amino-acid polypeptide reads, in one-letter code: Regulating synaptic membrane exocytosis protein 4 (269 aa).

Residues 115–233 form the C2 domain; that stretch reads PMGDVEIGLQ…DLTTLAVGWY (119 aa). Ser-254 and Ser-257 each carry phosphoserine.

As to quaternary structure, binds PPFIA3. Does not bind RAB3.

The protein resides in the synapse. In terms of biological role, regulates synaptic membrane exocytosis. This Homo sapiens (Human) protein is Regulating synaptic membrane exocytosis protein 4 (RIMS4).